A 100-amino-acid polypeptide reads, in one-letter code: NADH-quinone oxidoreductase subunit K (100 aa).

3 helical membrane-spanning segments follow: residues 2-22 (IGLSHYLIVSALIFSIGLMGV), 29-49 (LMLFFATEVMLNAVNIAFAAI), and 63-83 (FFIIAIAASEVAVGLGILIVL).

This sequence belongs to the complex I subunit 4L family. As to quaternary structure, NDH-1 is composed of 14 different subunits. Subunits NuoA, H, J, K, L, M, N constitute the membrane sector of the complex.

It localises to the cell inner membrane. It catalyses the reaction a quinone + NADH + 5 H(+)(in) = a quinol + NAD(+) + 4 H(+)(out). Functionally, NDH-1 shuttles electrons from NADH, via FMN and iron-sulfur (Fe-S) centers, to quinones in the respiratory chain. The immediate electron acceptor for the enzyme in this species is believed to be ubiquinone. Couples the redox reaction to proton translocation (for every two electrons transferred, four hydrogen ions are translocated across the cytoplasmic membrane), and thus conserves the redox energy in a proton gradient. The polypeptide is NADH-quinone oxidoreductase subunit K (Sulfurovum sp. (strain NBC37-1)).